Here is a 445-residue protein sequence, read N- to C-terminus: Oxysterols receptor LXR-alpha (445 aa).

2 disordered regions span residues 1-34 (MSLW…QGGN) and 62-86 (TALL…KKGP). Residues 1–94 (MSLWLEAAVP…GPAPKMLGNE (94 aa)) are transactivation AF-1; required for ligand-independent transactivation function. Positions 93 to 168 (NELCSVCGDK…AGMREECVLS (76 aa)) form a DNA-binding region, nuclear receptor. NR C4-type zinc fingers lie at residues 96–116 (CSVC…CEGC) and 132–156 (CHSG…LRKC). Residues 178-200 (KRQEEEQAQATSVSPRVSSPPQV) are disordered. Residues 189–200 (SVSPRVSSPPQV) are compositionally biased toward low complexity. Ser-191 carries the phosphoserine modification. The transactivation AF-2; required for ligand-dependent transactivation function; mediates interaction with CCAR2 stretch occupies residues 203–445 (QLSPEQLGMI…LLSEIWDVHE (243 aa)). The NR LBD domain maps to 207-445 (EQLGMIEKLV…LLSEIWDVHE (239 aa)).

This sequence belongs to the nuclear hormone receptor family. NR1 subfamily. Heterodimer of NR1H3 and RXR (retinoic acid receptor). Interacts with CCAR2 (via N-terminus) in a ligand-independent manner. Interacts with SIRT1 and this interaction is inhibited by CCAR2. Ubiquitinated by UBR5, leading to its degradation: UBR5 specifically recognizes and binds ligand-bound NR1H3 when it is not associated with coactivators (NCOAs). In presence of NCOAs, the UBR5-degron is not accessible, preventing its ubiquitination and degradation. As to expression, in adults it is expressed in spleen, pituitary, lung, liver, and fat. Weaker expression is observed in several other tissues.

Its subcellular location is the nucleus. The protein resides in the cytoplasm. Functionally, nuclear receptor that exhibits a ligand-dependent transcriptional activation activity. Interaction with retinoic acid receptor (RXR) shifts RXR from its role as a silent DNA-binding partner to an active ligand-binding subunit in mediating retinoid responses through target genes defined by LXRES. LXRES are DR4-type response elements characterized by direct repeats of two similar hexanuclotide half-sites spaced by four nucleotides. Plays an important role in the regulation of cholesterol homeostasis, regulating cholesterol uptake through MYLIP-dependent ubiquitination of LDLR, VLDLR and LRP8. Interplays functionally with RORA for the regulation of genes involved in liver metabolism. Induces LPCAT3-dependent phospholipid remodeling in endoplasmic reticulum (ER) membranes of hepatocytes, driving SREBF1 processing and lipogenesis. Via LPCAT3, triggers the incorporation of arachidonate into phosphatidylcholines of ER membranes, increasing membrane dynamics and enabling triacylglycerols transfer to nascent very low-density lipoprotein (VLDL) particles. Via LPCAT3 also counteracts lipid-induced ER stress response and inflammation, likely by modulating SRC kinase membrane compartmentalization and limiting the synthesis of lipid inflammatory mediators. The polypeptide is Oxysterols receptor LXR-alpha (Nr1h3) (Rattus norvegicus (Rat)).